The sequence spans 89 residues: Ubiquinol-cytochrome-c reductase complex assembly factor 3 (89 aa).

The Mitochondrial matrix segment spans residues 1 to 7; the sequence is MEAARKA. Residues 8–28 traverse the membrane as a helical segment; the sequence is LAVVAVLGAGGGVGSILFALV. The mediates lipid-binding stretch occupies residues 23–80; the sequence is ILFALVTPGELQKQLMLQEMPERDSRRRDEAVRTKELVMATLKDAAATKENVAWRRNW. Residues 29–89 lie on the Mitochondrial intermembrane side of the membrane; the sequence is TPGELQKQLM…WTVRGDGRSA (61 aa).

This sequence belongs to the UQCC3 family. In terms of assembly, associates with the ubiquinol-cytochrome c reductase complex (mitochondrial respiratory chain complex III(CIII) or cytochrome b-c1 complex). Interacts with UQCC1. Forms a complex, named COMC, composed of UQCC1, UQCC2; UQCC3 and UQCC4; mediates MT-CYB hemylation and association with the first nuclear-encoded complex III subunit UQCRQ. In terms of processing, probably cleaved by OMA1 under mitochondrial stress conditions.

The protein resides in the mitochondrion inner membrane. In terms of biological role, required for the assembly of the ubiquinol-cytochrome c reductase complex (mitochondrial respiratory chain complex III or cytochrome b-c1 complex), mediating cytochrome b recruitment and probably stabilization within the complex. Thereby, plays an important role in ATP production by mitochondria. Cardiolipin-binding protein, it may also control the cardiolipin composition of mitochondria membranes and their morphology. In Rattus norvegicus (Rat), this protein is Ubiquinol-cytochrome-c reductase complex assembly factor 3.